The following is an 882-amino-acid chain: Cadherin-1 (882 aa).

Positions 1-23 are cleaved as a signal peptide; that stretch reads MGPWSRSLSALCCCCRCNPWLCR. Residues 24–154 constitute a propeptide that is removed on maturation; it reads EPEPCIPGFG…PHHGLRRQKR (131 aa). A disordered region spans residues 117-137; the sequence is EVSAHHHHHHSHHDSPSGTQT. Cadherin domains are found at residues 154-262, 263-375, 376-486, 487-595, and 594-702; these read RDWV…KPQF, TQEV…APRF, NPTT…APIF, VPPQ…GPVP, and VPEP…RPAE. Residues 155–709 are Extracellular-facing; that stretch reads DWVIPPISCP…PAEAGLQVPA (555 aa). Ser280 is a glycosylation site (O-linked (Man...) serine). Thr285, Thr358, Thr470, Thr472, and Thr509 each carry an O-linked (Man...) threonine glycan. A glycan (N-linked (GlcNAc...) asparagine) is linked at Asn558. 3 O-linked (Man...) threonine glycosylation sites follow: Thr576, Thr578, and Thr580. Asn637 is a glycosylation site (N-linked (GlcNAc...) asparagine). Residues 710-730 form a helical membrane-spanning segment; that stretch reads ILGILGGILAFLILILLLLLL. Residues 731 to 882 lie on the Cytoplasmic side of the membrane; sequence VRRRRVVKEP…ADMYGGGEDD (152 aa). The interval 747–767 is disordered; that stretch reads DTRDNVYYYDEEGGGEEDQDF. Phosphotyrosine; by SRC occurs at positions 753, 754, and 755. Acidic residues predominate over residues 755–767; that stretch reads YDEEGGGEEDQDF. The segment at 758–769 is required for binding CTNND1 and PSEN1; the sequence is EGGGEEDQDFDL. Phosphoserine is present on residues Ser770, Ser793, Ser838, Ser840, and Ser846. Positions 811-882 are required for binding alpha, beta and gamma catenins; the sequence is IDENLKAADS…ADMYGGGEDD (72 aa).

In terms of assembly, homodimer; disulfide-linked. Component of an E-cadherin/ catenin adhesion complex composed of at least E-cadherin/CDH1, beta-catenin/CTNNB1 or gamma-catenin/JUP, and potentially alpha-catenin/CTNNA1; the complex is located to adherens junctions. Found in a complex composed of CDH1, RAP1A and PKP3; PKP3 acts as a scaffold protein within the complex, the complex is required for CDH1 localization to mature desmosome cell junctions. Interacts with the TRPV4 and CTNNB1 complex. Interacts with CTNND1. The stable association of CTNNA1 is controversial as CTNNA1 was shown not to bind to F-actin when assembled in the complex. Alternatively, the CTNNA1-containing complex may be linked to F-actin by other proteins such as LIMA1. Interaction with PSEN1, cleaves CDH1 resulting in the disassociation of cadherin-based adherens junctions (CAJs). Interacts with AJAP1 and DLGAP5. Interacts with TBC1D2. Interacts with CAV1. Interacts with PIP5K1C. Interacts with RAB8B. Interacts with DDR1; this stabilizes CDH1 at the cell surface and inhibits its internalization. Interacts with RAPGEF2. Interacts with KLRG1. Forms a ternary complex composed of ADAM10, CADH1 and EPHA4; within the complex, CADH1 is cleaved by ADAM10 which disrupts adherens junctions. Interacts with SPEF1. Interacts with CTNNB1 and PKP2. Interacts with AMOTL2; the interaction may facilitate binding of radial actin fibers to cell junction complexes. Interacts with DSG3; the interaction is required for CDH1 localization to developing adherens junctions. Post-translationally, during apoptosis or with calcium influx, cleaved by a membrane-bound metalloproteinase (ADAM10), PS1/gamma-secretase and caspase-3. Processing by the metalloproteinase, induced by calcium influx, causes disruption of cell-cell adhesion and the subsequent release of beta-catenin into the cytoplasm. The residual membrane-tethered cleavage product is rapidly degraded via an intracellular proteolytic pathway. Cleavage by caspase-3 releases the cytoplasmic tail resulting in disintegration of the actin microfilament system. The gamma-secretase-mediated cleavage promotes disassembly of adherens junctions. During development of the cochlear organ of Corti, cleavage by ADAM10 at adherens junctions promotes pillar cell separation. N-glycosylation at Asn-637 is essential for expression, folding and trafficking. Addition of bisecting N-acetylglucosamine by MGAT3 modulates its cell membrane location. In terms of processing, ubiquitinated by a SCF complex containing SKP2, which requires prior phosphorylation by CK1/CSNK1A1. Ubiquitinated by CBLL1/HAKAI, requires prior phosphorylation at Tyr-754. Post-translationally, O-glycosylated. O-manosylated by TMTC1, TMTC2, TMTC3 or TMTC4. Thr-285 and Thr-509 are O-mannosylated by TMTC2 or TMTC4 but not TMTC1 or TMTC3.

Its subcellular location is the cell junction. It is found in the adherens junction. The protein localises to the cell membrane. The protein resides in the endosome. It localises to the golgi apparatus. Its subcellular location is the trans-Golgi network. It is found in the cytoplasm. The protein localises to the desmosome. Its function is as follows. Cadherins are calcium-dependent cell adhesion proteins. They preferentially interact with themselves in a homophilic manner in connecting cells; cadherins may thus contribute to the sorting of heterogeneous cell types. CDH1 is involved in mechanisms regulating cell-cell adhesions, mobility and proliferation of epithelial cells. Promotes organization of radial actin fiber structure and cellular response to contractile forces, via its interaction with AMOTL2 which facilitates anchoring of radial actin fibers to CDH1 junction complexes at the cell membrane. Plays a role in the early stages of desmosome cell-cell junction formation via facilitating the recruitment of DSG2 and DSP to desmosome plaques. Has a potent invasive suppressor role. It is a ligand for integrin alpha-E/beta-7. In terms of biological role, E-Cad/CTF2 promotes non-amyloidogenic degradation of Abeta precursors. Has a strong inhibitory effect on APP C99 and C83 production. The polypeptide is Cadherin-1 (CDH1) (Bos taurus (Bovine)).